The primary structure comprises 449 residues: Biotin carboxylase (449 aa).

The Biotin carboxylation domain occupies 1 to 445; it reads MLEKVLIANR…NIHYLEKKLG (445 aa). ATP-binding positions include lysine 116, lysine 159, 165–166, 201–204, histidine 209, and histidine 236; these read GG and EKFL. The 198-residue stretch at 120-317 folds into the ATP-grasp domain; that stretch reads KDAMKRAGVP…IVKEMLRIAS (198 aa). A hydrogencarbonate-binding site is contributed by lysine 238. The ATP site is built by glutamate 276 and glutamate 288. Positions 276, 288, and 290 each coordinate Mg(2+). Mn(2+)-binding residues include glutamate 276, glutamate 288, and asparagine 290. 3 residues coordinate hydrogencarbonate: arginine 292, valine 295, and arginine 338. Residue arginine 292 is part of the active site. Arginine 338 lines the biotin pocket.

In terms of assembly, acetyl-CoA carboxylase is a heterohexamer of biotin carboxyl carrier protein, biotin carboxylase and the two subunits of carboxyl transferase in a 2:2 complex. The cofactor is Mg(2+). Requires Mn(2+) as cofactor.

The catalysed reaction is N(6)-biotinyl-L-lysyl-[protein] + hydrogencarbonate + ATP = N(6)-carboxybiotinyl-L-lysyl-[protein] + ADP + phosphate + H(+). The protein operates within lipid metabolism; malonyl-CoA biosynthesis; malonyl-CoA from acetyl-CoA: step 1/1. Functionally, this protein is a component of the acetyl coenzyme A carboxylase complex; first, biotin carboxylase catalyzes the carboxylation of the carrier protein and then the transcarboxylase transfers the carboxyl group to form malonyl-CoA. The protein is Biotin carboxylase (accC) of Pseudomonas aeruginosa (strain ATCC 15692 / DSM 22644 / CIP 104116 / JCM 14847 / LMG 12228 / 1C / PRS 101 / PAO1).